The following is a 499-amino-acid chain: Ethanolamine-phosphate phospho-lyase (499 aa).

N6-(pyridoxal phosphate)lysine is present on K278.

It belongs to the class-III pyridoxal-phosphate-dependent aminotransferase family. Homotetramer. Pyridoxal 5'-phosphate is required as a cofactor.

It is found in the mitochondrion. It catalyses the reaction phosphoethanolamine + H2O = acetaldehyde + NH4(+) + phosphate. In terms of biological role, catalyzes the pyridoxal-phosphate-dependent breakdown of phosphoethanolamine, converting it to ammonia, inorganic phosphate and acetaldehyde. This chain is Ethanolamine-phosphate phospho-lyase (Etnppl), found in Mus musculus (Mouse).